Consider the following 303-residue polypeptide: Protoheme IX farnesyltransferase (303 aa).

The next 9 helical transmembrane spans lie at 25–45 (MGLVQGNLIPAFAGAWLAVVM), 54–74 (IPQILLMLFGSTLIMGGACAL), 104–124 (LLLLSFGMMLVGEICLFLLNI), 125–145 (PSGVLGLMGIVGYVSYYSIWS), 151–171 (WNTVIGSFPGAVPPLIGWVAI), 179–199 (AIALFLVVFCWQPIHFYALAI), 227–247 (FIWLIILLPVPLLLINLGVVF), 248–268 (VVLATLLNLGWIALGLTTFKK), and 280–300 (FIYSLNYLVIFFVLAVIVSLL).

This sequence belongs to the UbiA prenyltransferase family. Protoheme IX farnesyltransferase subfamily. As to quaternary structure, interacts with CtaA.

It is found in the cell membrane. It carries out the reaction heme b + (2E,6E)-farnesyl diphosphate + H2O = Fe(II)-heme o + diphosphate. It functions in the pathway porphyrin-containing compound metabolism; heme O biosynthesis; heme O from protoheme: step 1/1. Converts heme B (protoheme IX) to heme O by substitution of the vinyl group on carbon 2 of heme B porphyrin ring with a hydroxyethyl farnesyl side group. The protein is Protoheme IX farnesyltransferase of Staphylococcus aureus (strain Mu3 / ATCC 700698).